Reading from the N-terminus, the 397-residue chain is Mannitol-1-phosphate 5-dehydrogenase (397 aa).

9–20 contacts NAD(+); sequence AVHFGAGNIGRG. Residue Lys220 is part of the active site.

This sequence belongs to the mannitol dehydrogenase family. In terms of assembly, monomer.

It carries out the reaction D-mannitol 1-phosphate + NAD(+) = beta-D-fructose 6-phosphate + NADH + H(+). In terms of biological role, catalyzes the NAD(H)-dependent interconversion of D-fructose 6-phosphate and D-mannitol 1-phosphate in the mannitol metabolic pathway. The chain is Mannitol-1-phosphate 5-dehydrogenase from Podospora anserina (strain S / ATCC MYA-4624 / DSM 980 / FGSC 10383) (Pleurage anserina).